Reading from the N-terminus, the 252-residue chain is Geranylgeranylglyceryl phosphate synthase (252 aa).

Mg(2+) is bound by residues D27 and T57. Sn-glycerol 1-phosphate is bound by residues 175 to 181, 206 to 207, and 228 to 229; these read YLEAGSG, GG, and GN.

The protein belongs to the GGGP/HepGP synthase family. Group II subfamily. Requires Mg(2+) as cofactor.

The protein resides in the cytoplasm. The enzyme catalyses sn-glycerol 1-phosphate + (2E,6E,10E)-geranylgeranyl diphosphate = sn-3-O-(geranylgeranyl)glycerol 1-phosphate + diphosphate. It participates in membrane lipid metabolism; glycerophospholipid metabolism. Functionally, prenyltransferase that catalyzes the transfer of the geranylgeranyl moiety of geranylgeranyl diphosphate (GGPP) to the C3 hydroxyl of sn-glycerol-1-phosphate (G1P). This reaction is the first ether-bond-formation step in the biosynthesis of archaeal membrane lipids. This Metallosphaera sedula (strain ATCC 51363 / DSM 5348 / JCM 9185 / NBRC 15509 / TH2) protein is Geranylgeranylglyceryl phosphate synthase.